The sequence spans 97 residues: Large ribosomal subunit protein eL21 (97 aa).

The segment covering Met1–Gly24 has biased composition (basic residues). Residues Met1 to Leu25 form a disordered region.

It belongs to the eukaryotic ribosomal protein eL21 family.

The chain is Large ribosomal subunit protein eL21 (rpl21e) from Pyrococcus horikoshii (strain ATCC 700860 / DSM 12428 / JCM 9974 / NBRC 100139 / OT-3).